The following is a 249-amino-acid chain: Triosephosphate isomerase (249 aa).

Position 9–11 (Asn-9–Lys-11) interacts with substrate. The Electrophile role is filled by His-94. The active-site Proton acceptor is Glu-166. Substrate is bound by residues Gly-172 and Gly-232–Gly-233.

Belongs to the triosephosphate isomerase family. In terms of assembly, homodimer.

It localises to the cytoplasm. It catalyses the reaction D-glyceraldehyde 3-phosphate = dihydroxyacetone phosphate. The protein operates within carbohydrate biosynthesis; gluconeogenesis. Its pathway is carbohydrate degradation; glycolysis; D-glyceraldehyde 3-phosphate from glycerone phosphate: step 1/1. Functionally, involved in the gluconeogenesis. Catalyzes stereospecifically the conversion of dihydroxyacetone phosphate (DHAP) to D-glyceraldehyde-3-phosphate (G3P). This chain is Triosephosphate isomerase, found in Xylella fastidiosa (strain 9a5c).